A 116-amino-acid polypeptide reads, in one-letter code: Staphylococcal complement inhibitor (116 aa).

Positions 1–31 (MKIRKSILAGTLAIVLASPLVTNLDKNEAQA) are cleaved as a signal peptide. Positions 62 to 79 (LATGSLNTYYKRTIKISG) are essential for activity.

Belongs to the SCIN family.

It is found in the secreted. Functionally, involved in countering the first line of host defense mechanisms. Efficiently inhibits opsonization, phagocytosis and killing of S.aureus by human neutrophils. Acts by binding and stabilizing human C3 convertases (C4b2a and C3bBb), leading to their inactivation. The convertases are no longer able to cleave complement C3, therefore preventing further C3b deposition on the bacterial surface and phagocytosis of the bacterium. Also prevents C5a-induced neutrophil responses. This chain is Staphylococcal complement inhibitor (scn), found in Staphylococcus aureus (strain N315).